The primary structure comprises 389 residues: Succinate--CoA ligase [ADP-forming] subunit beta (389 aa).

Residues 9–246 (KEILRRHNAN…ITEEDPYEVK (238 aa)) form the ATP-grasp domain. Residues Lys-48, 55 to 57 (GRG), Glu-101, Leu-104, and Glu-109 contribute to the ATP site. Mg(2+)-binding residues include Asn-201 and Asp-215. Substrate is bound by residues Asn-266 and 323-325 (GIV).

Belongs to the succinate/malate CoA ligase beta subunit family. Heterotetramer of two alpha and two beta subunits. It depends on Mg(2+) as a cofactor.

It carries out the reaction succinate + ATP + CoA = succinyl-CoA + ADP + phosphate. The enzyme catalyses GTP + succinate + CoA = succinyl-CoA + GDP + phosphate. It participates in carbohydrate metabolism; tricarboxylic acid cycle; succinate from succinyl-CoA (ligase route): step 1/1. Succinyl-CoA synthetase functions in the citric acid cycle (TCA), coupling the hydrolysis of succinyl-CoA to the synthesis of either ATP or GTP and thus represents the only step of substrate-level phosphorylation in the TCA. The beta subunit provides nucleotide specificity of the enzyme and binds the substrate succinate, while the binding sites for coenzyme A and phosphate are found in the alpha subunit. The chain is Succinate--CoA ligase [ADP-forming] subunit beta from Leptospira biflexa serovar Patoc (strain Patoc 1 / Ames).